Here is a 283-residue protein sequence, read N- to C-terminus: Protein FAM170B (283 aa).

Basic and acidic residues predominate over residues 1 to 11 (MKCYFTDHRGE). Disordered regions lie at residues 1–58 (MKCY…REEG) and 246–283 (AQGQAHDQQLEEEQSPSDNSECSRPQGEVLSAQQQEKQ).

This sequence belongs to the FAM170 family. Interacts with GOPC. As to expression, exclusively expressed in adult testis.

Its subcellular location is the cytoplasmic vesicle. It is found in the secretory vesicle. The protein resides in the acrosome. It localises to the acrosome outer membrane. In terms of biological role, plays a role in fertilization through the acrosome reaction. The sequence is that of Protein FAM170B from Homo sapiens (Human).